A 440-amino-acid polypeptide reads, in one-letter code: Xaa-Pro dipeptidase (440 aa).

The Mn(2+) site is built by Asp-244, Asp-255, His-335, Glu-380, and Glu-419.

The protein belongs to the peptidase M24B family. Bacterial-type prolidase subfamily. Mn(2+) serves as cofactor.

The catalysed reaction is Xaa-L-Pro dipeptide + H2O = an L-alpha-amino acid + L-proline. Its function is as follows. Splits dipeptides with a prolyl residue in the C-terminal position. This chain is Xaa-Pro dipeptidase, found in Shewanella piezotolerans (strain WP3 / JCM 13877).